Here is a 193-residue protein sequence, read N- to C-terminus: MLIALLIILAYVIGSIPSGLIVGKLAKGIDIREHGSGNLGATNAFRTLGVKAGSVVIAADILKGTLAAALPYLLHVPIHPLLAGVAAVIGHVFPVFAKFKGGKAVATSGGVLLFYAPLLFVTMVAVFFVFLFLTKFVSLSSMLTGIYTIIYCLFVKDPYLLVVVTLLTAFVIYRHRANIKRIINKTEPKIKWF.

The next 4 membrane-spanning stretches (helical) occupy residues 2–22 (LIAL…GLIV), 76–96 (VPIH…FPVF), 112–132 (LLFY…VFLF), and 152–172 (CLFV…AFVI).

This sequence belongs to the PlsY family. In terms of assembly, probably interacts with PlsX.

The protein resides in the cell membrane. It carries out the reaction an acyl phosphate + sn-glycerol 3-phosphate = a 1-acyl-sn-glycero-3-phosphate + phosphate. It participates in lipid metabolism; phospholipid metabolism. In terms of biological role, catalyzes the transfer of an acyl group from acyl-phosphate (acyl-PO(4)) to glycerol-3-phosphate (G3P) to form lysophosphatidic acid (LPA). This enzyme utilizes acyl-phosphate as fatty acyl donor, but not acyl-CoA or acyl-ACP. This is Glycerol-3-phosphate acyltransferase from Bacillus velezensis (strain DSM 23117 / BGSC 10A6 / LMG 26770 / FZB42) (Bacillus amyloliquefaciens subsp. plantarum).